A 393-amino-acid polypeptide reads, in one-letter code: Elongation factor Tu (393 aa).

The 199-residue stretch at 6–204 folds into the tr-type G domain; it reads KPHINVGTIG…ALEKIELPMR (199 aa). Residues 15 to 22 are G1; it reads GHVDHGKT. Residue 15-22 participates in GTP binding; sequence GHVDHGKT. Residue Thr22 coordinates Mg(2+). The segment at 58-62 is G2; sequence GITIS. A G3 region spans residues 79 to 82; sequence DCPG. Residues 79 to 83 and 134 to 137 each bind GTP; these read DCPGH and NKCD. The G4 stretch occupies residues 134-137; the sequence is NKCD. The G5 stretch occupies residues 172-174; the sequence is SAV.

It belongs to the TRAFAC class translation factor GTPase superfamily. Classic translation factor GTPase family. EF-Tu/EF-1A subfamily. Monomer.

Its subcellular location is the cytoplasm. It carries out the reaction GTP + H2O = GDP + phosphate + H(+). In terms of biological role, GTP hydrolase that promotes the GTP-dependent binding of aminoacyl-tRNA to the A-site of ribosomes during protein biosynthesis. The protein is Elongation factor Tu of Anaplasma phagocytophilum (strain HZ).